Reading from the N-terminus, the 317-residue chain is NADH kinase (317 aa).

It belongs to the NAD kinase family. Homodimer. As to expression, ubiquitous.

Its subcellular location is the cytoplasm. The catalysed reaction is NADH + ATP = ADP + NADPH + H(+). Two-fold decrease in activity in the presence of PPi, iodoacetate or para-chloromercuribenzoate. Functionally, phosphorylates specifically NADH. Can phosphorylate NAD with a 100-fold decrease in efficiency compared to NADH. Prefers ATP as nucleoside triphosphate substrate. Can also utilize UTP, GTP and CTP. Key source of the cellular reductant NADPH which is an important antioxidant factor. The polypeptide is NADH kinase (NADK3) (Arabidopsis thaliana (Mouse-ear cress)).